The chain runs to 218 residues: Small ribosomal subunit protein uS3c (218 aa).

One can recognise a KH type-2 domain in the interval 47-118; that stretch reads VQKNMKTSSG…KLNIAITRIE (72 aa).

Belongs to the universal ribosomal protein uS3 family. Part of the 30S ribosomal subunit.

It is found in the plastid. Its subcellular location is the chloroplast. This is Small ribosomal subunit protein uS3c (rps3) from Helianthus annuus (Common sunflower).